Reading from the N-terminus, the 261-residue chain is Short-chain-enoyl-CoA hydratase (261 aa).

The active-site Nucleophile is glutamate 114. Catalysis depends on glutamate 134, which acts as the Proton acceptor.

This sequence belongs to the enoyl-CoA hydratase/isomerase family. Homotetramer.

The enzyme catalyses a short-chain (3S)-3-hydroxyacyl-CoA = a short-chain (2E)-enoyl-CoA + H2O. Its pathway is lipid metabolism; butanoate metabolism. Functionally, catalyzes the reversible hydration of crotonyl-CoA. Can also use hexenoyl-CoA but not higher analogs. The sequence is that of Short-chain-enoyl-CoA hydratase (crt) from Clostridium acetobutylicum (strain ATCC 824 / DSM 792 / JCM 1419 / IAM 19013 / LMG 5710 / NBRC 13948 / NRRL B-527 / VKM B-1787 / 2291 / W).